The sequence spans 85 residues: Antifungal protein (85 aa).

Positions 1-18 (MVKLFVIVILALIAVAFG) are cleaved as a signal peptide. A run of 2 repeats spans residues 19–25 (QHGHGGQ) and 67–73 (QHGHGGQ). Residues 19-73 (QHGHGGQDQHGYGHGQQAVYGKGHEGHGVNNLGQDGHGQHGYAHGHSDQHGHGGQ) form a 2 X 7 AA repeats of Q-H-G-H-G-G-Q region. Gly residues predominate over residues 22–32 (HGGQDQHGYGH). Residues 22 to 85 (HGGQDQHGYG…QHDGYKNRGY (64 aa)) are disordered. Over residues 63 to 85 (GHSDQHGHGGQHGQHDGYKNRGY) the composition is skewed to basic and acidic residues.

Homodimer. In terms of processing, the N-terminus is blocked. In terms of tissue distribution, hemolymph.

Functionally, this protein inhibits the growth of a variety of fungal species. The antifungal activity of this protein is enhanced by the presence of sarcotoxin IA. The chain is Antifungal protein from Sarcophaga peregrina (Flesh fly).